The chain runs to 298 residues: Cyanophycinase (298 aa).

Catalysis depends on charge relay system residues S155, E173, and H197.

It belongs to the peptidase S51 family.

The catalysed reaction is [L-4-(L-arginin-2-N-yl)aspartate](n) + H2O = [L-4-(L-arginin-2-N-yl)aspartate](n-1) + L-4-(L-arginin-2-N-yl)aspartate. Its function is as follows. Exopeptidase that catalyzes the hydrolytic cleavage of multi-L-arginyl-poly-L-aspartic acid (cyanophycin; a water-insoluble reserve polymer) into aspartate-arginine dipeptides. In Trichormus variabilis (strain ATCC 29413 / PCC 7937) (Anabaena variabilis), this protein is Cyanophycinase (cphB).